A 152-amino-acid chain; its full sequence is Large ribosomal subunit protein bL9 (152 aa).

This sequence belongs to the bacterial ribosomal protein bL9 family.

In terms of biological role, binds to the 23S rRNA. The chain is Large ribosomal subunit protein bL9 from Corynebacterium urealyticum (strain ATCC 43042 / DSM 7109).